Here is an 828-residue protein sequence, read N- to C-terminus: Zinc finger protein 438 (828 aa).

3 disordered regions span residues 1–29 (MQNS…KGLQ), 143–173 (KSGC…LYKP), and 193–231 (ALTN…PAKQ). 2 stretches are compositionally biased toward polar residues: residues 16 to 29 (NIPS…KGLQ) and 150 to 159 (PAQTQMCPQM). C2H2-type zinc fingers lie at residues 507–529 (HRCH…MNTH), 535–557 (YSCR…MKLH), and 567–590 (MCCE…KEVH). Residues 680–721 (EGTFPGSKGTQEELVQHASPDWKRHPERGKPEKVHSSSEESH) form a disordered region. A compositionally biased stretch (basic and acidic residues) spans 689 to 721 (TQEELVQHASPDWKRHPERGKPEKVHSSSEESH). The segment at 776–799 (FNCLLCAEMLGRKEDLLHHWKHQH) adopts a C2H2-type 4 zinc-finger fold.

This sequence belongs to the krueppel C2H2-type zinc-finger protein family. Ubiquitous.

It is found in the nucleus. Functionally, isoform 1 acts as a transcriptional repressor. The sequence is that of Zinc finger protein 438 (ZNF438) from Homo sapiens (Human).